A 108-amino-acid chain; its full sequence is UPF0060 membrane protein Mvan_3406 (108 aa).

The next 4 membrane-spanning stretches (helical) occupy residues 7-27 (LLFV…WQGV), 32-52 (GLTW…VAAF), 61-81 (VLAA…VVAD), and 87-107 (RWDI…MYAP).

This sequence belongs to the UPF0060 family.

The protein localises to the cell membrane. In Mycolicibacterium vanbaalenii (strain DSM 7251 / JCM 13017 / BCRC 16820 / KCTC 9966 / NRRL B-24157 / PYR-1) (Mycobacterium vanbaalenii), this protein is UPF0060 membrane protein Mvan_3406.